The sequence spans 627 residues: tRNA uridine 5-carboxymethylaminomethyl modification enzyme MnmG (627 aa).

FAD is bound by residues 16–21, V128, and S183; that span reads GAGHAG. 277-291 contacts NAD(+); sequence GPRYCPSIEDKIVRF. Q374 lines the FAD pocket.

The protein belongs to the MnmG family. As to quaternary structure, homodimer. Heterotetramer of two MnmE and two MnmG subunits. FAD is required as a cofactor.

Its subcellular location is the cytoplasm. Functionally, NAD-binding protein involved in the addition of a carboxymethylaminomethyl (cmnm) group at the wobble position (U34) of certain tRNAs, forming tRNA-cmnm(5)s(2)U34. This is tRNA uridine 5-carboxymethylaminomethyl modification enzyme MnmG from Finegoldia magna (strain ATCC 29328 / DSM 20472 / WAL 2508) (Peptostreptococcus magnus).